Consider the following 315-residue polypeptide: Ribose-phosphate pyrophosphokinase (315 aa).

ATP-binding positions include 37–39 (DGE) and 96–97 (RQ). Residues His-131 and Asp-171 each coordinate Mg(2+). Lys-195 is a catalytic residue. D-ribose 5-phosphate contacts are provided by residues Arg-197, Asp-221, and 225–229 (DTGGT).

Belongs to the ribose-phosphate pyrophosphokinase family. Class I subfamily. Homohexamer. Mg(2+) serves as cofactor.

The protein resides in the cytoplasm. It catalyses the reaction D-ribose 5-phosphate + ATP = 5-phospho-alpha-D-ribose 1-diphosphate + AMP + H(+). Its pathway is metabolic intermediate biosynthesis; 5-phospho-alpha-D-ribose 1-diphosphate biosynthesis; 5-phospho-alpha-D-ribose 1-diphosphate from D-ribose 5-phosphate (route I): step 1/1. Functionally, involved in the biosynthesis of the central metabolite phospho-alpha-D-ribosyl-1-pyrophosphate (PRPP) via the transfer of pyrophosphoryl group from ATP to 1-hydroxyl of ribose-5-phosphate (Rib-5-P). The protein is Ribose-phosphate pyrophosphokinase of Pasteurella multocida (strain Pm70).